The primary structure comprises 1139 residues: MTQLAVPSPVAPTFPDLVEIQRESFLWFLREGFEEELLSFSPIIDYTGKLELHFLPEYRPGDPSKGYKINRPRYDPEEAKRRDATYQAQIRVPTRLINKETGEIKDMDVFIGELPLMTDRGTFIINGAERVIVNQIVRSPGVYYKSELDKNGRRTYSASLIPNRGAWLKFETDKNGLVWVRIDKTRKLSAAVLLKALGLSDSEIYDNLRHPEFFQKTMEKEGPYTEEEALMELYRKLRPGEPPTVSGGQQLLESRFFDPKRYDLGRVGRYKLNKKLNLNVAESVRVLTVTDILAVIDYLINLEYDIGHVDDIDHLGNRRVRSVGELLQNQVRVGLNRLERIIRERMTVSESENLTPASLVNPKPLVAAIKEFFGSSQLSQFMDQTNPLAELTHKRRLSALGPGGLSRERAGFAVRDIHPSHYGRICPIETPEGPNAGLIGSLATHARVNQYGFIESPYYRVENGVVRKDLGMVYLTADEEDEYRVAPGDVPVDAEGRITADLVPVRYRQEFTTAHPTEVHYVQVAPVQVISVATSLIPFLEHDDANRALMGANMQRQAVPLLKPDRPYVGTGLEAQAARDSGMVVVSRTNGVVTYVSADEIVVRPDDGGDPIVYRLQKYQRSNQDTCLNQRPLVYTGDRVVAGQVLADGPATEGGELALGQNVLVAYMPWEGYNYEDAILISERLVYDDVFTSVHIEKHEIEARQTKLGPEEITREIPNVGEDALRDLDENGIVRIGAWVEAGDILVGKVTPKGESDQPPEERLLRAIFGEKARDVRDNSLRVPNGERGRVVDVRIFTREQGDELPPGANMVVRVYIALKRKIQVGDKIAGRHGNKGIISRILPIEDMPYLADGTPVDVVLNPLGVPSRMNVGQVYECLLGWAAEHLGVRFKLMPFDEMHGLEASRLTVEAKLREAREKTGKDWIFNPEGKYCGKIQVFDGRTGEPFDQPVTVGRAYMLKLVHLVDDKIHARSTGPYSLVTQQPLGGKAQQGGQRFGEMEVWALEAFGAAYILQELLTVKSDDMVGRNEALNAIVKGKPIPRPGTPESFKVLVRELQSLCLDVSVHKVEVDSEGQTHDVEVDLMADTSNRHTPSRPTYESVTSEDLSPSPAFTRVLRTADANASRSLEEDEDEEEEEDF.

The segment at 1085-1139 is disordered; the sequence is ADTSNRHTPSRPTYESVTSEDLSPSPAFTRVLRTADANASRSLEEDEDEEEEEDF. Polar residues predominate over residues 1086–1106; it reads DTSNRHTPSRPTYESVTSEDL. Residues 1128 to 1139 show a composition bias toward acidic residues; the sequence is EEDEDEEEEEDF.

Belongs to the RNA polymerase beta chain family. In terms of assembly, in cyanobacteria the RNAP catalytic core is composed of 2 alpha, 1 beta, 1 beta', 1 gamma and 1 omega subunit. When a sigma factor is associated with the core the holoenzyme is formed, which can initiate transcription.

The catalysed reaction is RNA(n) + a ribonucleoside 5'-triphosphate = RNA(n+1) + diphosphate. Its function is as follows. DNA-dependent RNA polymerase catalyzes the transcription of DNA into RNA using the four ribonucleoside triphosphates as substrates. This Synechococcus sp. (strain JA-2-3B'a(2-13)) (Cyanobacteria bacterium Yellowstone B-Prime) protein is DNA-directed RNA polymerase subunit beta.